Reading from the N-terminus, the 35-residue chain is Purotoxin-1 (35 aa).

4 cysteine pairs are disulfide-bonded: Cys3–Cys16, Cys10–Cys21, Cys15–Cys32, and Cys23–Cys30.

Belongs to the neurotoxin 33 family. As to expression, expressed by the venom gland.

The protein localises to the secreted. Inhibits P2RX3 receptors. Has an analgesic effect in rat. Enhances the high-affinity desensitization of P2RX3 purinoceptors. At 50 nM, decreases the IC(50) for ambient ATP from 46.5 nM to 12.7 nM in mouse P2RX3. The protein is Purotoxin-1 of Alopecosa marikovskyi (Wolf spider).